A 404-amino-acid polypeptide reads, in one-letter code: Serine/threonine transporter SstT (404 aa).

8 helical membrane-spanning segments follow: residues 17 to 37 (IGIG…LTGF), 39 to 59 (ILGK…VFAL), 75 to 95 (MTLI…VAVL), 138 to 158 (ALAT…GLAL), 179 to 199 (IVVW…FTTI), 212 to 232 (FLIL…NPLI), 287 to 307 (IPLG…VLTL), and 313 to 333 (FGIP…AVSA).

It belongs to the dicarboxylate/amino acid:cation symporter (DAACS) (TC 2.A.23) family.

The protein localises to the cell membrane. It catalyses the reaction L-serine(in) + Na(+)(in) = L-serine(out) + Na(+)(out). It carries out the reaction L-threonine(in) + Na(+)(in) = L-threonine(out) + Na(+)(out). Involved in the import of serine and threonine into the cell, with the concomitant import of sodium (symport system). The sequence is that of Serine/threonine transporter SstT from Streptococcus pyogenes serotype M1.